The primary structure comprises 553 residues: Urocanate hydratase (553 aa).

Residues 45-46 (GG), glutamine 123, 169-171 (GMG), aspartate 189, arginine 194, 235-236 (NA), 256-260 (QTSAH), 266-267 (YV), tyrosine 315, and glycine 485 contribute to the NAD(+) site.

Belongs to the urocanase family. The cofactor is NAD(+).

Its subcellular location is the cytoplasm. It catalyses the reaction 4-imidazolone-5-propanoate = trans-urocanate + H2O. Its pathway is amino-acid degradation; L-histidine degradation into L-glutamate; N-formimidoyl-L-glutamate from L-histidine: step 2/3. Functionally, catalyzes the conversion of urocanate to 4-imidazolone-5-propionate. In Staphylococcus aureus (strain MRSA252), this protein is Urocanate hydratase.